Reading from the N-terminus, the 329-residue chain is MDGPVAEHAKQEPFHVVTPLLESWALSQVAGMPVFLKCENVQPSGSFKIRGIGHFCQEMAKKGCRHLVCSSGGNAGIAAAYAARKLGIPATIVLPESTSLQVVQRLQGEGAEVQLTGKVWDEANLRAQELAKRDGWENVPPFDHPLIWKGHASLVQELKAVLRTPPGALVLAVGGGGLLAGVVAGLLEVGWQHVPIIAMETHGAHCFNAAITAGKLVTLPDITSVAKSLGAKTVAARALECMQVCKIHSEVVEDTEAVSAVQQLLDDERMLVEPACGAALAAIYSGLLRRLQAEGCLPPSLTSVVVIVCGGNNINSRELQALKTHLGQV.

Met1 carries the N-acetylmethionine modification. At Lys48 the chain carries N6-(pyridoxal phosphate)lysine.

The protein belongs to the serine/threonine dehydratase family. Monomer. Homodimer. Pyridoxal 5'-phosphate serves as cofactor. In terms of tissue distribution, expressed in lung cancer cell lines.

It carries out the reaction L-serine = pyruvate + NH4(+). The enzyme catalyses L-threonine = 2-oxobutanoate + NH4(+). It catalyses the reaction L-glutamate = D-glutamate. In terms of biological role, catalyzes the pyridoxal-phosphate-dependent dehydrative deamination of L-threonine and L-serine to ammonia and alpha-ketobutyrate and pyruvate, respectively. Also exhibits racemase activity towards L-glutamate and D-glutamate. This is Serine dehydratase-like (SDSL) from Homo sapiens (Human).